The sequence spans 937 residues: Protein translocase subunit SecA (937 aa).

Residues Gln90, Gly108–Thr112, and Asp509 contribute to the ATP site.

Belongs to the SecA family. As to quaternary structure, monomer and homodimer. Part of the essential Sec protein translocation apparatus which comprises SecA, SecYEG and auxiliary proteins SecDF. Other proteins may also be involved.

It localises to the cell inner membrane. The protein resides in the cellular thylakoid membrane. Its subcellular location is the cytoplasm. It catalyses the reaction ATP + H2O + cellular proteinSide 1 = ADP + phosphate + cellular proteinSide 2.. Part of the Sec protein translocase complex. Interacts with the SecYEG preprotein conducting channel. Has a central role in coupling the hydrolysis of ATP to the transfer of proteins into and across the cell membrane, serving as an ATP-driven molecular motor driving the stepwise translocation of polypeptide chains across the membrane. Its function is as follows. Probably participates in protein translocation into and across both the cytoplasmic and thylakoid membranes in cyanobacterial cells. In Parasynechococcus marenigrum (strain WH8102), this protein is Protein translocase subunit SecA.